The chain runs to 357 residues: Anthranilate phosphoribosyltransferase (357 aa).

5-phospho-alpha-D-ribose 1-diphosphate contacts are provided by residues Gly94, Gly97 to Asp98, Thr102, Asn104 to Thr107, Lys122 to Ser130, and Gly134. Position 94 (Gly94) interacts with anthranilate. Residue Ser106 participates in Mg(2+) binding. Residue Asn125 participates in anthranilate binding. An anthranilate-binding site is contributed by Arg180. Mg(2+)-binding residues include Asp238 and Glu239.

This sequence belongs to the anthranilate phosphoribosyltransferase family. Homodimer. It depends on Mg(2+) as a cofactor.

The catalysed reaction is N-(5-phospho-beta-D-ribosyl)anthranilate + diphosphate = 5-phospho-alpha-D-ribose 1-diphosphate + anthranilate. The protein operates within amino-acid biosynthesis; L-tryptophan biosynthesis; L-tryptophan from chorismate: step 2/5. In terms of biological role, catalyzes the transfer of the phosphoribosyl group of 5-phosphorylribose-1-pyrophosphate (PRPP) to anthranilate to yield N-(5'-phosphoribosyl)-anthranilate (PRA). The chain is Anthranilate phosphoribosyltransferase from Mycobacterium sp. (strain JLS).